The chain runs to 321 residues: Glucokinase (321 aa).

Residue 8-13 (GDVGGT) coordinates ATP.

It belongs to the bacterial glucokinase family.

It localises to the cytoplasm. It carries out the reaction D-glucose + ATP = D-glucose 6-phosphate + ADP + H(+). The polypeptide is Glucokinase (Enterobacter sp. (strain 638)).